The following is a 370-amino-acid chain: Putative agmatine deiminase (370 aa).

Cysteine 361 acts as the Amidino-cysteine intermediate in catalysis.

This sequence belongs to the agmatine deiminase family.

The catalysed reaction is agmatine + H2O = N-carbamoylputrescine + NH4(+). The chain is Putative agmatine deiminase from Shewanella sp. (strain MR-7).